Here is a 263-residue protein sequence, read N- to C-terminus: MDIRASLSILLLLFGLSQASPLREFEAIFVSEPETVDITTQILETNKGSSEVLFEGDVVLPKNRNALICEDKSCFWKKNANNIVEVPYVVSGEFSINDKSVIANAISIFHAQTCIRFVPRSIQADYLSIENKDGCYSAIGRTGGKQVVSLNRKGCVYSGIAQHELNHALGFYHEQSRSDRDQYVRINWNNISPGMAYNFLKQKTNNQNTPYDYGSLMHYGKTAFAIQPGLETITPIPDENVQIGQRQGLSKIDILRINKLYGC.

The first 19 residues, Met-1–Ala-19, serve as a signal peptide directing secretion. Residues Ser-20–Arg-64 constitute a propeptide, activation peptide. Positions Asn-65–Cys-263 constitute a Peptidase M12A domain. 3 disulfide bridges follow: Cys-69–Cys-74, Cys-114–Cys-263, and Cys-135–Cys-155. His-163 is a Zn(2+) binding site. The active site involves Glu-164. Residues His-167 and His-173 each coordinate Zn(2+).

It depends on Zn(2+) as a cofactor. As to expression, expressed in cells of the hatching gland.

It is found in the secreted. It carries out the reaction Hydrolysis of the inner layer of fish egg envelope. Also hydrolysis of casein and small molecule substrates such as succinyl-Leu-Leu-Val-Tyr-|-7-(4-methyl)coumarylamide.. In terms of biological role, metalloendopeptidase which participates in the breakdown of the egg envelope at the time of hatching. Cleaves the N-terminal regions of the zona pellucia glycoproteins ZP2 and ZP3, where it specifically recognizes the peptide sequences TVQQS-|-DYLIK (major site) and KLMLK-|-APEPF (minor site). This is Hatching enzyme 1.2 from Danio rerio (Zebrafish).